A 319-amino-acid polypeptide reads, in one-letter code: Acetyl-coenzyme A carboxylase carboxyl transferase subunit alpha (319 aa).

The CoA carboxyltransferase C-terminal domain maps to 35 to 296 (NIDEEVHRLR…KAQLLEDLAD (262 aa)).

This sequence belongs to the AccA family. In terms of assembly, acetyl-CoA carboxylase is a heterohexamer composed of biotin carboxyl carrier protein (AccB), biotin carboxylase (AccC) and two subunits each of ACCase subunit alpha (AccA) and ACCase subunit beta (AccD).

It is found in the cytoplasm. The catalysed reaction is N(6)-carboxybiotinyl-L-lysyl-[protein] + acetyl-CoA = N(6)-biotinyl-L-lysyl-[protein] + malonyl-CoA. Its pathway is lipid metabolism; malonyl-CoA biosynthesis; malonyl-CoA from acetyl-CoA: step 1/1. In terms of biological role, component of the acetyl coenzyme A carboxylase (ACC) complex. First, biotin carboxylase catalyzes the carboxylation of biotin on its carrier protein (BCCP) and then the CO(2) group is transferred by the carboxyltransferase to acetyl-CoA to form malonyl-CoA. This chain is Acetyl-coenzyme A carboxylase carboxyl transferase subunit alpha, found in Salmonella agona (strain SL483).